The following is a 300-amino-acid chain: Probable acetyltransferase Rv3034c (300 aa).

An N-terminal signal peptide occupies residues 1–25 (MNVLSLGSSSGVVWGRVPITAPAGA).

The protein belongs to the transferase hexapeptide repeat family.

Functionally, may be involved in the biosynthesis of 6-O-methylglucosyl-containing lipopolysaccharides (MGLP). Its function is as follows. Regulates host peroxisome homeostasis in response to intracellular redox levels to favor mycobacterial infection in macrophage. Induces the expression of host peroxisome biogenesis and proliferation factors as well as peroxisome associated enzymes. Inhibits the induction of host pexophagy mechanism by down-regulating the expression of pexophagy associated proteins and adapter molecules in infected macrophages. However, during increased oxidative stress conditions, it induces degradation of dysfunctional and damaged peroxisomes. Regulation of peroxisome biogenesis and degradation is dependent upon host p-mTORC1 mediated signaling pathway. The sequence is that of Probable acetyltransferase Rv3034c from Mycobacterium tuberculosis (strain ATCC 25618 / H37Rv).